A 484-amino-acid polypeptide reads, in one-letter code: Serine protease HTR4 (484 aa).

An N-terminal signal peptide occupies residues 1-28 (MARPLQRPAGLGPFVLLWLLLPAPSGRG). The region spanning 36 to 114 (PVPRCPAACE…GRPLGTCGCP (79 aa)) is the IGFBP N-terminal domain. Intrachain disulfides connect cysteine 40–cysteine 66, cysteine 44–cysteine 68, cysteine 49–cysteine 69, cysteine 55–cysteine 72, cysteine 80–cysteine 94, cysteine 88–cysteine 111, cysteine 113–cysteine 132, and cysteine 121–cysteine 157. The 55-residue stretch at 105–159 (GRPLGTCGCPAAGATVCGSDGRTYRSLCALRAENRAARLRGALPAVPVQKGDCGD) folds into the Kazal-like domain. Residues 209 to 369 (ASGFIVSEDG…IPSDRIRQFL (161 aa)) are serine protease. Catalysis depends on charge relay system residues histidine 225, aspartate 255, and serine 333. The PDZ domain occupies 390–472 (LRMLPLTMNL…LSLLVRRKSQ (83 aa)).

It belongs to the peptidase S1C family.

Its subcellular location is the secreted. Its function is as follows. Serine protease. The sequence is that of Serine protease HTR4 (HTRA4) from Bos taurus (Bovine).